We begin with the raw amino-acid sequence, 244 residues long: MATIGRDTTISWLGHGTFHIQTPGGKKILIDAWVDGNPVCPDEWKQRVRSEGLDAIFLTHGHFDHIADILDLATATNATIVGQFDITSWLASKGVGQDRLVGFNKGGTVEVAGIRATMTHATHSSTFTDNGIIVPMGTEAGYVLRMENGFVMYHTGDTAVTMDMQIIGDLYRPELVFLPIGDHFTMDPMQAAYALKLIRPKFAIPEHYGTFPILRGTPDQLREQCSAFGVDVTVIDLKPGESVS.

This sequence belongs to the UPF0173 family.

This is UPF0173 metal-dependent hydrolase Rcas_3617 from Roseiflexus castenholzii (strain DSM 13941 / HLO8).